A 524-amino-acid chain; its full sequence is Chitinase D (524 aa).

Residues 1–30 form the signal peptide; sequence MNQAVRFRPVITFALAFILIITWFAPRADA. Residues 95–180 enclose the Fibronectin type-III domain; the sequence is VPAGLTSSLV…TSLSVTTSTG (86 aa). The region spanning 190–514 is the GH18 domain; it reads KWLIGYWHNF…NAHRPFLNGL (325 aa). Residue Glu-303 is the Proton donor of the active site.

Belongs to the glycosyl hydrolase 18 family. Chitinase class II subfamily.

It catalyses the reaction Random endo-hydrolysis of N-acetyl-beta-D-glucosaminide (1-&gt;4)-beta-linkages in chitin and chitodextrins.. The polypeptide is Chitinase D (chiD) (Niallia circulans (Bacillus circulans)).